The sequence spans 516 residues: Monocarboxylate transporter 12 (516 aa).

Residues 1 to 50 (MPSGSHWTANSSKIITWLLEQPGKEEKRKTMAKVNRARSTSPPDGGWGWM) lie on the Cytoplasmic side of the membrane. A run of 12 helical transmembrane segments spans residues 51-73 (IVAGCFLVTICTRAVTRCISIFF), 88-108 (AWIHSIVDCVTMLCAPLGSVV), 116-136 (VGIMLGGLLASTGLILSSFAT), 145-165 (LGVLTGLGFALCYSPAIAMVG), 178-198 (IAMSGSGIGTFILAPVVQLLI), 207-227 (LLILGGFVLNLCVCGALMRPI), 283-303 (FVVLAVSVLFMAYGCSPLFVY), 319-339 (AFLMSILGVIDIIGNITFGWL), 350-370 (YVCYLFAVGMDGLCYLCLPML), 377-397 (VPFSCTFGYFDGAYVTLIPVV), 410-430 (ALGVVYFLHAVPYLVSPPIAG), and 440-460 (TAAFLLCGFSMIFSSVLLGFA). The Cytoplasmic portion of the chain corresponds to 461–516 (RLIKRMRKTQLQFIAKESDPKLQLWTNGSVAYSVARELDQKHGEPVATAVPGYSLT).

This sequence belongs to the major facilitator superfamily. Monocarboxylate porter (TC 2.A.1.13) family. In terms of assembly, interacts with isoform 2 of BSG; this interaction is required for its localization to the plasma membrane. As to expression, most highly expressed in kidney, followed by retina, lung, heart and testis. Very weakly expressed in brain and liver. Also detected in lens.

It localises to the cell membrane. It is found in the basolateral cell membrane. It catalyses the reaction creatine(in) = creatine(out). The catalysed reaction is guanidinoacetate(in) = guanidinoacetate(out). With respect to regulation, creatine uptake is inhibited by carbonyl cyanide 3-chlorophenylhydrazone (CCCP) and by valinomycin. In terms of biological role, functions as a transporter for creatine and as well for its precursor guanidinoacetate. Transport of creatine and GAA is independent of resting membrane potential and extracellular Na(+), Cl(-), or pH. Contributes to the process of creatine biosynthesis and distribution. This chain is Monocarboxylate transporter 12, found in Homo sapiens (Human).